Here is a 313-residue protein sequence, read N- to C-terminus: Sideroflexin-4 (313 aa).

5 helical membrane passes run Ala87 to Leu107, Leu141 to Leu161, Phe175 to Ala191, Val230 to Phe247, and Val269 to Ile289.

This sequence belongs to the sideroflexin family.

It localises to the mitochondrion inner membrane. Mitochondrial amino-acid transporter. Does not act as a serine transporter: not able to mediate transport of serine into mitochondria. The chain is Sideroflexin-4 from Bos taurus (Bovine).